The following is a 693-amino-acid chain: CREB-regulated transcription coactivator 2 (693 aa).

Residues 1-20 (MATSGANGPGSATASASNPR) are compositionally biased toward polar residues. Positions 1 to 30 (MATSGANGPGSATASASNPRKFSEKIALQK) are disordered. Position 2 is an N-acetylalanine (Ala2). Asymmetric dimethylarginine; by PRMT6 is present on Arg51. A phosphoserine mark is found at Ser70, Ser86, and Ser90. Asymmetric dimethylarginine; by PRMT6 occurs at positions 99, 120, and 123. Residue Ser136 is modified to Phosphoserine. An asymmetric dimethylarginine; by PRMT6 mark is found at Arg161 and Arg168. Position 169 is a phosphothreonine (Thr169). Ser171 bears the Phosphoserine mark. A compositionally biased stretch (polar residues) spans 174 to 188 (ALHTSVMNPSPQDTY). The segment at 174–210 (ALHTSVMNPSPQDTYPSPAAPSVLPSRRGGCLDGETD) is disordered. The required for interaction with COP1 stretch occupies residues 209–215 (TDSKVPA). A Glycyl lysine isopeptide (Lys-Gly) (interchain with G-Cter in SUMO2) cross-link involves residue Lys234. A Nuclear export signal motif is present at residues 271 to 287 (TGGSLPDLTNLHFPPPL). 3 disordered regions span residues 271-307 (TGGS…GSST), 335-463 (HSPL…SPTL), and 476-548 (KLPT…QSYH). A Phosphoserine; by MARK2 modification is found at Ser274. The residue at position 306 (Ser306) is a Phosphoserine. The segment covering 339-351 (SHPSFQSSLSNPN) has biased composition (polar residues). 2 stretches are compositionally biased toward low complexity: residues 352-378 (LQAS…SSLA) and 386-424 (SLGH…PGAS). Phosphoserine is present on residues Ser368, Ser393, Ser433, and Ser456. Positions 447–463 (SQQQLPKQFSPTMSPTL) are enriched in polar residues. Position 488 is a phosphotyrosine (Tyr488). Phosphoserine is present on residues Ser489 and Ser492. Position 501 is a phosphothreonine (Thr501). Ser613 and Ser624 each carry phosphoserine.

Belongs to the TORC family. In terms of assembly, binds, as a tetramer, through its N-terminal region, with the bZIP domain of CREB1. 'Arg-314' in the bZIP domain of CREB1 is essential for this interaction. Interaction, via its C-terminal, with TAF4, enhances recruitment of TAF4 to CREB1. Interacts with SIK2. Interacts with 14-3-3 proteins, YWHAB and YWHAG. Interacts (probably when phosphorylated at Ser-171) with YWHAE. Interacts with calmodulin-dependent catalytic subunit PPP3CA/calcineurin A. Interaction with COP1 mediates nuclear export and degradation of CRTC2. Phosphorylation/dephosphorylation states of Ser-171 are required for regulating transduction of CREB activity. CRTCs/TORCs are inactive when phosphorylated, and active when dephosphorylated at this site. This primary site of phosphorylation, is regulated by cAMP and calcium levels and is dependent on the phosphorylation of SIKs (SIK1 and SIK2) by LKB1. Following adenylyl cyclase activation, dephosphorylated at Ser-171 by PPP3CA/calcineurin A resulting in CRTC2 dissociation from 14-3-3 proteins and PPP3CA. Both insulin and AMPK increase this phosphorylation of CRTC2 while glucagon suppresses it. Phosphorylation at Ser-274 by MARK2 is induced under low glucose conditions and dephosphorylated in response to glucose influx. Phosphorylation at Ser-274 promotes interaction with 14-3-3 proteins and translocation to the cytoplasm. In terms of processing, asymmetric dimethylation of arginine resisues by PRMT6 enhances the association of CRTC2 with CREB on the promoters of gluconeogenic genes.

The protein resides in the cytoplasm. It is found in the nucleus. Transcriptional coactivator for CREB1 which activates transcription through both consensus and variant cAMP response element (CRE) sites. Acts as a coactivator, in the SIK/TORC signaling pathway, being active when dephosphorylated and acts independently of CREB1 'Ser-133' phosphorylation. Enhances the interaction of CREB1 with TAF4. Regulates gluconeogenesis as a component of the LKB1/AMPK/TORC2 signaling pathway. Regulates the expression of specific genes such as the steroidogenic gene, StAR. Potent coactivator of PPARGC1A and inducer of mitochondrial biogenesis in muscle cells. The protein is CREB-regulated transcription coactivator 2 (CRTC2) of Bos taurus (Bovine).